The following is a 185-amino-acid chain: Threonylcarbamoyl-AMP synthase (185 aa).

The region spanning 4–185 is the YrdC-like domain; sequence SFRVQQAARE…LATGEVVRPG (182 aa).

Belongs to the SUA5 family. TsaC subfamily.

The protein localises to the cytoplasm. It catalyses the reaction L-threonine + hydrogencarbonate + ATP = L-threonylcarbamoyladenylate + diphosphate + H2O. Required for the formation of a threonylcarbamoyl group on adenosine at position 37 (t(6)A37) in tRNAs that read codons beginning with adenine. Catalyzes the conversion of L-threonine, HCO(3)(-)/CO(2) and ATP to give threonylcarbamoyl-AMP (TC-AMP) as the acyladenylate intermediate, with the release of diphosphate. The sequence is that of Threonylcarbamoyl-AMP synthase from Pseudomonas putida (strain ATCC 47054 / DSM 6125 / CFBP 8728 / NCIMB 11950 / KT2440).